Reading from the N-terminus, the 66-residue chain is Putative transmembrane protein ORF66 (66 aa).

At 1 to 6 (MSDVDD) the chain is on the cytoplasmic side. The chain crosses the membrane as a helical span at residues 7–27 (TIVDSIAIVGAILIGIFLIVV). Residues 28–39 (SVSNTSLFNNTE) are Extracellular-facing. Residues 40 to 60 (YDSMINSVLVIISSVIAYTLG) form a helical membrane-spanning segment. At 61-66 (KRRSKS) the chain is on the cytoplasmic side.

Its subcellular location is the host membrane. This Acidianus filamentous virus 2 (isolate Italy/Pozzuoli) (AFV-2) protein is Putative transmembrane protein ORF66.